The sequence spans 578 residues: Adenine deaminase (578 aa).

This sequence belongs to the metallo-dependent hydrolases superfamily. Adenine deaminase family. Mn(2+) serves as cofactor.

The enzyme catalyses adenine + H2O + H(+) = hypoxanthine + NH4(+). This is Adenine deaminase from Ligilactobacillus salivarius (strain UCC118) (Lactobacillus salivarius).